Consider the following 714-residue polypeptide: Delta-like protein 1 (714 aa).

An N-terminal signal peptide occupies residues 1–17 (MGRRSALALAVVSALLC). At 18 to 537 (QVWSSGVFEL…VAAQGGSFPW (520 aa)) the chain is on the extracellular side. Residues 176–220 (FVCDEHYYGEGCSVFCRPRDDAFGHFTCGERGEKMCDPGWKGQYC) form the DSL domain. 27 disulfide bridges follow: cysteine 178/cysteine 187, cysteine 191/cysteine 203, cysteine 211/cysteine 220, cysteine 225/cysteine 236, cysteine 229/cysteine 242, cysteine 244/cysteine 253, cysteine 256/cysteine 267, cysteine 262/cysteine 273, cysteine 275/cysteine 284, cysteine 291/cysteine 303, cysteine 297/cysteine 313, cysteine 315/cysteine 324, cysteine 331/cysteine 342, cysteine 336/cysteine 351, cysteine 353/cysteine 362, cysteine 369/cysteine 380, cysteine 374/cysteine 390, cysteine 392/cysteine 401, cysteine 408/cysteine 419, cysteine 413/cysteine 428, cysteine 430/cysteine 439, cysteine 446/cysteine 457, cysteine 451/cysteine 466, cysteine 468/cysteine 477, cysteine 484/cysteine 495, cysteine 489/cysteine 504, and cysteine 506/cysteine 515. EGF-like domains are found at residues 225-253 (CLPGCDDQHGYCDKPGECKCRVGWQGRYC), 256-284 (CIRYPGCLHGTCQQPWQCNCQEGWGGLFC), and 291-324 (CTHHKPCRNGATCTNTGQGSYTCSCRPGYTGANC). Residues 331 to 362 (CAPSPCRNGGSCTDLEDSYSCTCPPGFYGKVC) form the EGF-like 4; calcium-binding domain. EGF-like domains are found at residues 369–401 (CADGPCFNGGRCSDNPDGGYTCHCPAGFSGFNC) and 408–439 (CSSSPCSNGAKCVDLGNSYLCRCQTGFSGRYC). The region spanning 446-477 (CASSPCANGGTCRDSVNDFSCTCPPGYTGRNC) is the EGF-like 7; calcium-binding domain. An N-linked (GlcNAc...) asparagine glycan is attached at asparagine 476. An EGF-like 8 domain is found at 484–515 (CEHAPCHNGATCHQRGQRYMCECAQGYGGANC). Residues 538–560 (VAVCAGVVLVLLLLLGCAAVVVC) form a helical membrane-spanning segment. Residues 561-714 (VRLKLQKHQP…KDECVIATEV (154 aa)) lie on the Cytoplasmic side of the membrane. Lysine 605 participates in a covalent cross-link: Glycyl lysine isopeptide (Lys-Gly) (interchain with G-Cter in ubiquitin). Threonine 630 is subject to Phosphothreonine. Residues 644 to 656 (ATVRDAHSKRDTK) are compositionally biased toward basic and acidic residues. Residues 644–690 (ATVRDAHSKRDTKCQSQGSVGEEKSTSTLRGGEVPDRKRPESVYSTS) are disordered. The residue at position 685 (serine 685) is a Phosphoserine; by PKB. Residue serine 688 is modified to Phosphoserine. The interaction with MAGI1 stretch occupies residues 711–714 (ATEV).

Homodimer. Interacts with TJP1. Interacts with MAGI1 (via PDZ domain); forms a complex with CTNNB1 and CDH2 and promotes recruitment to the adherens junction and stabilization on the cell surface. Interacts with PSEN1; undergoes a presenilin-dependent gamma-secretase cleavage that releases a Dll1-intracellular form. Interacts with MFAP5. Interacts with MIB1. Interacts with NEURL1B; leads to ubiquitination. Interacts with NEURL1. Interacts with SYNJ2BP; enhances DLL1 protein stability, and promotes Notch signaling in endothelial cells. Interacts with MAGI1, MAGI2, MAGI3 and MPDZ. Interacts (via ubiquitin) with EPN1 (via IUM domain); binding with NOTCH1 attached to neighboring cell, promotes ligand ubiquitination and EPN1 interaction, leading to NECD transendocytosis and Notch signaling. Interacts with NOTCH1. Ubiquitinated by MIB (MIB1 or MIB2), leading to its endocytosis and subsequent degradation. Ubiquitinated; promotes recycling back to the plasma membrane and confers a strong affinity for NOTCH1. Mono- and multi-ubiquitinated. Multi-ubiquitination of Lys-605 by MIB1 promotes both cis and trans-interaction with NOTCH1, as well as activation of Notch signaling. Ubiquitinated by NEURL1B. In terms of processing, phosphorylated in a membrane association-dependent manner. Phosphorylation at Ser-688 requires the presence of Ser-685, whereas phosphorylation at Thr-630 and Ser-685 occur independently of the other sites. Phosphorylation is required for full ligand activity in vitro and affects surface presentation, ectodomain shedding, and endocytosis. Post-translationally, O-fucosylated. Can be elongated to a disaccharide by MFNG.

It localises to the apical cell membrane. Its subcellular location is the cell junction. It is found in the adherens junction. The protein localises to the membrane raft. Functionally, transmembrane ligand protein of NOTCH1, NOTCH2 and NOTCH3 receptors that binds the extracellular domain (ECD) of Notch receptor in a cis and trans fashion manner. Following transinteraction, ligand cells produce mechanical force that depends of a clathrin-mediated endocytosis, requiring ligand ubiquitination, EPN1 interaction, and actin polymerisation; these events promote Notch receptor extracellular domain (NECD) transendocytosis and triggers Notch signaling through induction of cleavage, hyperphosphorylation, and nuclear accumulation of the intracellular domain of Notch receptors (NICD). Is required for embryonic development and maintenance of adult stem cells in many different tissues and immune systeme; the DLL1-induced Notch signaling is mediated through an intercellular communication that regulates cell lineage, cell specification, cell patterning and morphogenesis through effects on differentiation and proliferation. Plays a role in brain development at different level, namely by regulating neuronal differentiation of neural precursor cells via cell-cell interaction, most likely through the lateral inhibitory system in an endogenous level dependent-manner. During neocortex development, Dll1-Notch signaling transmission is mediated by dynamic interactions between intermediate neurogenic progenitors and radial glia; the cell-cell interactions are mediated via dynamic and transient elongation processes, likely to reactivate/maintain Notch activity in neighboring progenitors, and coordinate progenitor cell division and differentiation across radial and zonal boundaries. During cerebellar development, regulates Bergmann glial monolayer formation and its morphological maturation through a Notch signaling pathway. At the retina and spinal cord level, regulates neurogenesis by preventing the premature differentiation of neural progenitors and also by maintaining progenitors in spinal cord through Notch signaling pathway. Also controls neurogenesis of the neural tube in a progenitor domain-specific fashion along the dorsoventral axis. Maintains quiescence of neural stem cells and plays a role as a fate determinant that segregates asymmetrically to one daughter cell during neural stem cells mitosis, resulting in neuronal differentiation in Dll1-inheriting cell. Plays a role in immune systeme development, namely the development of all T-cells and marginal zone (MZ) B cells. Blocks the differentiation of progenitor cells into the B-cell lineage while promoting the emergence of a population of cells with the characteristics of a T-cell/NK-cell precursor. Also plays a role during muscle development. During early development, inhibits myoblasts differentiation from the medial dermomyotomal lip and later regulates progenitor cell differentiation. Directly modulates cell adhesion and basal lamina formation in satellite cells through Notch signaling. Maintains myogenic progenitors pool by suppressing differentiation through down-regulation of MYOD1 and is required for satellite cell homing and PAX7 expression. During craniofacial and trunk myogenesis suppresses differentiation of cranial mesoderm-derived and somite-derived muscle via MYOD1 regulation but in cranial mesoderm-derived progenitors, is neither required for satellite cell homing nor for PAX7 expression. Also plays a role during pancreatic cell development. During type B pancreatic cell development, may be involved in the initiation of proximodistal patterning in the early pancreatic epithelium. Stimulates multipotent pancreatic progenitor cells proliferation and pancreatic growth by maintaining HES1 expression and PTF1A protein levels. During fetal stages of development, is required to maintain arterial identity and the responsiveness of arterial endothelial cells for VEGFA through regulation of KDR activation and NRP1 expression. Controls sprouting angiogenesis and subsequent vertical branch formation through regulation on tip cell differentiation. Negatively regulates goblet cell differentiation in intestine and controls secretory fat commitment through lateral inhibition in small intestine. Plays a role during inner ear development; negatively regulates auditory hair cell differentiation. Plays a role during nephron development through Notch signaling pathway. Regulates growth, blood pressure and energy homeostasis. This chain is Delta-like protein 1 (Dll1), found in Rattus norvegicus (Rat).